The following is a 472-amino-acid chain: DEAD-box ATP-dependent RNA helicase 58, chloroplastic (472 aa).

A chloroplast-targeting transit peptide spans 1–54; that stretch reads MASQLLNVPHLAFFPKISYASVFSTLKPSFFHSTSTRRALKSSPSSRIINLQAV. Positions 76–104 match the Q motif motif; it reads RQICQGFVPEHILHRMEEIGFVFPTDIQR. A Helicase ATP-binding domain is found at 107 to 286; sequence LPTLFTGRDC…DCIQQKWTKR (180 aa). ATP is bound at residue 120–127; that stretch reads AQTGSGKT. Positions 231–234 match the DEAD box motif; it reads DEVD. Positions 314–472 constitute a Helicase C-terminal domain; that stretch reads NKHQVLLALL…LMFSCEEMML (159 aa).

It belongs to the DEAD box helicase family.

The protein resides in the plastid. It is found in the chloroplast. The catalysed reaction is ATP + H2O = ADP + phosphate + H(+). The sequence is that of DEAD-box ATP-dependent RNA helicase 58, chloroplastic (RH58) from Arabidopsis thaliana (Mouse-ear cress).